The chain runs to 159 residues: Ribosomal RNA large subunit methyltransferase H (159 aa).

Residues Leu76, Gly108, and 127 to 132 (FGKMTL) contribute to the S-adenosyl-L-methionine site.

This sequence belongs to the RNA methyltransferase RlmH family. Homodimer.

Its subcellular location is the cytoplasm. The catalysed reaction is pseudouridine(1915) in 23S rRNA + S-adenosyl-L-methionine = N(3)-methylpseudouridine(1915) in 23S rRNA + S-adenosyl-L-homocysteine + H(+). Specifically methylates the pseudouridine at position 1915 (m3Psi1915) in 23S rRNA. The protein is Ribosomal RNA large subunit methyltransferase H of Lysinibacillus sphaericus (strain C3-41).